Here is a 410-residue protein sequence, read N- to C-terminus: MGSSVYIMVELAIAVLAILGNVLVCWAVWINSNLQNVTNFFVVSLAAADIAVGVLAIPFAITISTGFCAACHGCLFFACFVLVLTQSSIFSLLAIAIDRYIAIRIPLRYNGLVTGMRAKGIIAICWVLSFAIGLTPMLGWNNCSQKDENSTKTCGEGRVTCLFEDVVPMNYMVYYNFFAFVLLPLLLMLAIYLRIFLAARRQLKQMESQPLPGERTRSTLQKEVHAAKSLAIIVGLFALCWLPLHIINCFTFFCSTCQHAPPWLMYLAIILSHSNSVVNPFIYAYRIREFRQTFRKIIRTHVLRRQEPFRAGGSSAWALAAHSTEGEQVSLRLNGHPLGVWANGSAPHSGRRPNGYTLGPGGGGSTQGSPGDVELLTQEHQEGQEHPGLGDHLAQGRVGTASWSSEFAPS.

The Extracellular portion of the chain corresponds to 1–4 (MGSS). The chain crosses the membrane as a helical span at residues 5–29 (VYIMVELAIAVLAILGNVLVCWAVW). Topologically, residues 30–39 (INSNLQNVTN) are cytoplasmic. A helical transmembrane segment spans residues 40–63 (FFVVSLAAADIAVGVLAIPFAITI). Over 64 to 74 (STGFCAACHGC) the chain is Extracellular. Disulfide bonds link Cys68–Cys154, Cys71–Cys143, and Cys74–Cys161. The chain crosses the membrane as a helical span at residues 75 to 97 (LFFACFVLVLTQSSIFSLLAIAI). The Cytoplasmic portion of the chain corresponds to 98-117 (DRYIAIRIPLRYNGLVTGMR). Residues 118-140 (AKGIIAICWVLSFAIGLTPMLGW) form a helical membrane-spanning segment. Over 141-168 (NNCSQKDENSTKTCGEGRVTCLFEDVVP) the chain is Extracellular. Asn142 and Asn149 each carry an N-linked (GlcNAc...) asparagine glycan. Glu164 contacts adenosine. Residues 169–193 (MNYMVYYNFFAFVLLPLLLMLAIYL) form a helical membrane-spanning segment. The Cytoplasmic segment spans residues 194 to 229 (RIFLAARRQLKQMESQPLPGERTRSTLQKEVHAAKS). The chain crosses the membrane as a helical span at residues 230-253 (LAIIVGLFALCWLPLHIINCFTFF). Asn248 provides a ligand contact to adenosine. Residues Cys254 and Cys257 are joined by a disulfide bond. Residues 254 to 261 (CSTCQHAP) lie on the Extracellular side of the membrane. The helical transmembrane segment at 262-285 (PWLMYLAIILSHSNSVVNPFIYAY) threads the bilayer. The adenosine site is built by Ser272 and His273. At 286-410 (RIREFRQTFR…ASWSSEFAPS (125 aa)) the chain is on the cytoplasmic side. The interaction with GAS2L2 stretch occupies residues 322-410 (HSTEGEQVSL…ASWSSEFAPS (89 aa)). The segment at 342 to 410 (ANGSAPHSGR…ASWSSEFAPS (69 aa)) is disordered. The span at 377–389 (TQEHQEGQEHPGL) shows a compositional bias: basic and acidic residues. The segment covering 401–410 (ASWSSEFAPS) has biased composition (polar residues).

It belongs to the G-protein coupled receptor 1 family. As to quaternary structure, interacts (via cytoplasmic C-terminal domain) with USP4; the interaction is direct. May interact with DRD4. Interacts with NECAB2. Interacts (via cytoplasmic C-terminal domain) with GAS2L2; interaction enhances receptor-mediated adenylyl cyclase activity. Post-translationally, ubiquitinated. Deubiquitinated by USP4; leading to stabilization and expression at the cell surface.

It is found in the cell membrane. Receptor for adenosine. The activity of this receptor is mediated by G proteins which activate adenylyl cyclase. This chain is Adenosine receptor A2a (Adora2a), found in Mus musculus (Mouse).